The sequence spans 144 residues: Urease subunit beta (144 aa).

Residues 110–119 show a composition bias toward low complexity; that stretch reads HAAPAAPAIP. The interval 110–144 is disordered; sequence HAAPAAPAIPARHESAAGDAPSPLKERAGFDNETR. The segment covering 133 to 144 has biased composition (basic and acidic residues); sequence LKERAGFDNETR.

Belongs to the urease beta subunit family. In terms of assembly, heterotrimer of UreA (gamma), UreB (beta) and UreC (alpha) subunits. Three heterotrimers associate to form the active enzyme.

Its subcellular location is the cytoplasm. It carries out the reaction urea + 2 H2O + H(+) = hydrogencarbonate + 2 NH4(+). It functions in the pathway nitrogen metabolism; urea degradation; CO(2) and NH(3) from urea (urease route): step 1/1. The chain is Urease subunit beta from Micrococcus luteus (strain ATCC 4698 / DSM 20030 / JCM 1464 / CCM 169 / CCUG 5858 / IAM 1056 / NBRC 3333 / NCIMB 9278 / NCTC 2665 / VKM Ac-2230) (Micrococcus lysodeikticus).